A 309-amino-acid polypeptide reads, in one-letter code: Porphobilinogen deaminase (309 aa).

C241 carries the post-translational modification S-(dipyrrolylmethanemethyl)cysteine.

This sequence belongs to the HMBS family. In terms of assembly, monomer. It depends on dipyrromethane as a cofactor.

It catalyses the reaction 4 porphobilinogen + H2O = hydroxymethylbilane + 4 NH4(+). It functions in the pathway porphyrin-containing compound metabolism; protoporphyrin-IX biosynthesis; coproporphyrinogen-III from 5-aminolevulinate: step 2/4. Its function is as follows. Tetrapolymerization of the monopyrrole PBG into the hydroxymethylbilane pre-uroporphyrinogen in several discrete steps. The sequence is that of Porphobilinogen deaminase from Bacillus thuringiensis subsp. konkukian (strain 97-27).